The chain runs to 138 residues: Large ribosomal subunit protein uL16 (138 aa).

Over residues 1-18 (MALMPKRVKHRKSQRGRI) the composition is skewed to basic residues. Residues 1–21 (MALMPKRVKHRKSQRGRIKGN) form a disordered region.

It belongs to the universal ribosomal protein uL16 family. Part of the 50S ribosomal subunit.

Functionally, binds 23S rRNA and is also seen to make contacts with the A and possibly P site tRNAs. The polypeptide is Large ribosomal subunit protein uL16 (Rhodopirellula baltica (strain DSM 10527 / NCIMB 13988 / SH1)).